Reading from the N-terminus, the 321-residue chain is Flagellin C (321 aa).

The protein belongs to the bacterial flagellin family.

The protein resides in the secreted. It is found in the bacterial flagellum. Its function is as follows. Flagellin is the subunit protein which polymerizes to form the filaments of bacterial flagella. This is Flagellin C (flaC) from Rhizobium meliloti (strain 1021) (Ensifer meliloti).